The following is a 174-amino-acid chain: UPF0398 protein llmg_0513 (174 aa).

This sequence belongs to the UPF0398 family.

The sequence is that of UPF0398 protein llmg_0513 from Lactococcus lactis subsp. cremoris (strain MG1363).